Here is a 270-residue protein sequence, read N- to C-terminus: Phosphatidylinositol transfer protein alpha isoform (270 aa).

A 1,2-diacyl-sn-glycero-3-phospho-(1D-myo-inositol) contacts are provided by Thr58, Lys60, Glu85, Asn89, Thr96, and Lys194. An N6-acetyllysine modification is found at Lys215.

The protein belongs to the PtdIns transfer protein family. PI transfer class I subfamily. Post-translationally, phosphorylated by PKC in a calcium and phosphatidylserine-dependent manner.

The protein resides in the cytoplasm. The protein localises to the nucleus. The catalysed reaction is a 1,2-diacyl-sn-glycero-3-phosphocholine(in) = a 1,2-diacyl-sn-glycero-3-phosphocholine(out). The enzyme catalyses a 1,2-diacyl-sn-glycero-3-phospho-(1D-myo-inositol)(in) = a 1,2-diacyl-sn-glycero-3-phospho-(1D-myo-inositol)(out). Functionally, catalyzes the transfer of phosphatidylinositol (PI) and phosphatidylcholine (PC) between membranes. Shows a preference for PI and PC containing shorter saturated or monosaturated acyl chains at the sn-1 and sn-2 positions. Preference order for PC is C16:1 &gt; C16:0 &gt; C18:1 &gt; C18:0 &gt; C20:4 and for PI is C16:1 &gt; C16:0 &gt; C18:1 &gt; C18:0 &gt; C20:4 &gt; C20:3. The protein is Phosphatidylinositol transfer protein alpha isoform (PITPNA) of Bos taurus (Bovine).